The primary structure comprises 335 residues: MIQFQRLHKSYTVDGRQIVALHPLDLRIGPGEVFGIIGHSGAGKSTLIRLINRLEEPTGGRLLIGDEDVTALNSTGLRALRRRVGMIFQHFNLLSSRTVAGNVAFPLELAGTPRAEIDARVAELLARVGLEQHATKYPAQLSGGQKQRVGIARALATRPQILLCDEATSALDPQTTASVLQLLAQINRELGLTIVLITHEMEVIRRVCDRVAVLDAGKLVETGPVTEVFLHPQHPTTRRFVSEAEHVDEAELHRDFEAVGGRIVRLTFLGNGTYEPVLGRIARETGVDYNILSGRVDRIKDTPYGQLTVALTGGDQNAARAGFVAAGVHVEDLRV.

Positions 2–241 (IQFQRLHKSY…PQHPTTRRFV (240 aa)) constitute an ABC transporter domain. Position 38-45 (38-45 (GHSGAGKS)) interacts with ATP.

This sequence belongs to the ABC transporter superfamily. Methionine importer (TC 3.A.1.24) family. The complex is composed of two ATP-binding proteins (MetN), two transmembrane proteins (MetI) and a solute-binding protein (MetQ).

The protein localises to the cell inner membrane. It carries out the reaction L-methionine(out) + ATP + H2O = L-methionine(in) + ADP + phosphate + H(+). It catalyses the reaction D-methionine(out) + ATP + H2O = D-methionine(in) + ADP + phosphate + H(+). Functionally, part of the ABC transporter complex MetNIQ involved in methionine import. Responsible for energy coupling to the transport system. This Xanthomonas campestris pv. campestris (strain 8004) protein is Methionine import ATP-binding protein MetN.